Reading from the N-terminus, the 90-residue chain is Bombyxin B-3 (90 aa).

An N-terminal signal peptide occupies residues 1–20 (MMKTTIMFMLVVVISLTYSS). Disulfide bonds link Cys30–Cys76, Cys42–Cys89, and Cys75–Cys80. Positions 49 to 67 (SGAQYAPYFWTRQYLGSRG) are cleaved as a propeptide — c peptide like.

It belongs to the insulin family. As to quaternary structure, heterodimer of a B chain and an A chain linked by two disulfide bonds.

Its subcellular location is the secreted. Functionally, brain peptide responsible for activation of prothoracic glands to produce ecdysone in insects. In Bombyx mori (Silk moth), this protein is Bombyxin B-3 (BBXB3).